Consider the following 450-residue polypeptide: NADP-specific glutamate dehydrogenase (450 aa).

The active site involves K114.

Belongs to the Glu/Leu/Phe/Val dehydrogenases family. As to quaternary structure, homohexamer.

The catalysed reaction is L-glutamate + NADP(+) + H2O = 2-oxoglutarate + NH4(+) + NADPH + H(+). The protein is NADP-specific glutamate dehydrogenase (gdhA) of Botryotinia fuckeliana (Noble rot fungus).